Here is a 304-residue protein sequence, read N- to C-terminus: ATP synthase gamma chain (304 aa).

Belongs to the ATPase gamma chain family. As to quaternary structure, F-type ATPases have 2 components, CF(1) - the catalytic core - and CF(0) - the membrane proton channel. CF(1) has five subunits: alpha(3), beta(3), gamma(1), delta(1), epsilon(1). CF(0) has three main subunits: a, b and c.

Its subcellular location is the cell membrane. In terms of biological role, produces ATP from ADP in the presence of a proton gradient across the membrane. The gamma chain is believed to be important in regulating ATPase activity and the flow of protons through the CF(0) complex. This is ATP synthase gamma chain from Mycolicibacterium paratuberculosis (strain ATCC BAA-968 / K-10) (Mycobacterium paratuberculosis).